The primary structure comprises 347 residues: Ornithine carbamoyltransferase (347 aa).

Carbamoyl phosphate is bound by residues S56 to T59, Q83, R107, and H134 to Q137. L-ornithine is bound by residues N168, D232, and S236–M237. Carbamoyl phosphate contacts are provided by residues C274–L275 and R320.

It belongs to the aspartate/ornithine carbamoyltransferase superfamily. OTCase family.

The protein resides in the cytoplasm. The enzyme catalyses carbamoyl phosphate + L-ornithine = L-citrulline + phosphate + H(+). In terms of biological role, reversibly catalyzes the transfer of the carbamoyl group from carbamoyl phosphate (CP) to the N(epsilon) atom of ornithine (ORN) to produce L-citrulline. The sequence is that of Ornithine carbamoyltransferase from Blochmanniella floridana.